The sequence spans 861 residues: MTVIDTSDLEKHTPMMRQYLGLKAAHPDMLLFYRMGDFYELFYDDAKRASEMLGISLTARGKSGGDPIPMAGIPYHAVEGYLAKLVNIGQSVAICEQIGDPATSKGPVERQVVRIVTPGTLTDEALLQEKQDNLLAALYQGKTGFGYATLDISSGRFVVAELPTREALEAELQRTNPAELLYSEDFTDMLLINNMKGIRRRPEWEFDYDTCINLLLNQFGTKDLHGFGITDARLALQAAGCLMQYVKDTQKMALPHINSIVRFNQSESIILDAATRRNLELTQNLSGGRENTLAWVLDNTATPMGSRMLQRWIHEPLRNRQTIQYRHSAVSELIEQDLYQTLHEQLKSLGDIERIMARLALRSARPRDFSRLKQALTLLPEIQQTLAICQQPRLNTLVQLLGEFPEQHDLLERAIVDNPPMLIRDGGVIRTGYNNELDEWRKLSEGASDYLVELEAREKQQTGINTLKVGYNRVHGYYIEVSRLQSDRVPLSYQRRQTLKGTERYITPELKEYEEKVLSSQGKALALEKQLWEQLFDLLLPKLQELQQFATAAAELDILSNFAERAELFNYQCPQMSHDIGINIEAGRHPVVERVSQAAFIANPVALTPQRQMLIVTGPNMGGKSTYMRQVALITLMAHIGCFVPADHAQIGEIDRIFTRIGASDDLASGRSTFMVEMTETANILHNATANSLVLMDEIGRGTSTYDGLALAWSAAEYLAKNVSALTLFATHYFELTQLPELLPSVINVHLDAIEHDDTIAFMHSVQEGAASKSYGLQVAALAGVPASVIKAAKHKLHQLENRDMTLSQQNPTQVSMNLLPPIPEPSLALEKLAQINPDELTPKQALDYLYELKRLSHTNT.

Glycine 618–serine 625 is an ATP binding site.

This sequence belongs to the DNA mismatch repair MutS family.

Its function is as follows. This protein is involved in the repair of mismatches in DNA. It is possible that it carries out the mismatch recognition step. This protein has a weak ATPase activity. This chain is DNA mismatch repair protein MutS, found in Shewanella frigidimarina (strain NCIMB 400).